The sequence spans 502 residues: Nondiscriminating glutamyl-tRNA synthetase EARS2, mitochondrial (502 aa).

Residues 1 to 20 (MAGMLREVCGAAASGLRVRF) constitute a mitochondrion transit peptide. An L-glutamate-binding site is contributed by 19–21 (RFG). The short motif at 24–32 (PTGFLHLGG) is the 'HIGH' region element. Residue histidine 29 participates in ATP binding. Residues glutamate 55, 207–211 (YHLAN), and arginine 225 each bind L-glutamate. Residues glutamate 228 and 263–267 (KLSKR) contribute to the ATP site. Residues 263–267 (KLSKR) carry the 'KMSKS' region motif.

This sequence belongs to the class-I aminoacyl-tRNA synthetase family. Glutamate--tRNA ligase type 1 subfamily.

Its subcellular location is the mitochondrion matrix. It carries out the reaction tRNA(Glx) + L-glutamate + ATP = L-glutamyl-tRNA(Glx) + AMP + diphosphate. The enzyme catalyses tRNA(Glu) + L-glutamate + ATP = L-glutamyl-tRNA(Glu) + AMP + diphosphate. The catalysed reaction is tRNA(Gln) + L-glutamate + ATP = L-glutamyl-tRNA(Gln) + AMP + diphosphate. Functionally, non-discriminating glutamyl-tRNA synthetase that catalyzes aminoacylation of both mitochondrial tRNA(Glu) and tRNA(Gln) and participates in RNA aminoacylation for mitochondrial protein translation. Attachs glutamate to tRNA(Glu) or tRNA(Gln) in a two-step reaction: glutamate is first activated by ATP to form Glu-AMP and then transferred to the acceptor end of tRNA(Glu) or tRNA(Gln). The protein is Nondiscriminating glutamyl-tRNA synthetase EARS2, mitochondrial of Gallus gallus (Chicken).